The primary structure comprises 465 residues: Neutrophil collagenase (465 aa).

The N-terminal stretch at 1-20 (MFRLKTLPLLIFLHTQLANA) is a signal peptide. The propeptide at 21–100 (FPVPEHLEEK…CGVPDSGDFL (80 aa)) is activation peptide. Asn-55 is a glycosylation site (N-linked (GlcNAc...) asparagine). Positions 89 to 96 (PRCGVPDS) match the Cysteine switch motif. Residue Cys-91 participates in Zn(2+) binding. N-linked (GlcNAc...) asparagine glycosylation is present at Asn-112. Asp-157 is a Ca(2+) binding site. 2 residues coordinate Zn(2+): His-167 and Asp-169. Residues Asp-174, Gly-175, Asn-177, and Ile-179 each contribute to the Ca(2+) site. His-182 contacts Zn(2+). Positions 189, 191, and 193 each coordinate Ca(2+). Zn(2+) is bound at residue His-195. Ca(2+)-binding residues include Asp-197 and Glu-200. His-217 lines the Zn(2+) pocket. Residue Glu-218 is part of the active site. Residues His-221 and His-227 each contribute to the Zn(2+) site. Hemopexin repeat units follow at residues 276–325 (PKAC…WPFL), 326–372 (PNGL…GFPR), 374–420 (VQAI…FPGV), and 421–464 (NCRV…WLNC). The cysteines at positions 279 and 464 are disulfide-linked. Asp-286 is a binding site for Ca(2+). Positions 378 and 425 each coordinate Ca(2+).

The protein belongs to the peptidase M10A family. The cofactor is Ca(2+). Zn(2+) is required as a cofactor. Neutrophils. Expressed in uterus. Low levels in kidney and muscle.

Its subcellular location is the cytoplasmic granule. It localises to the secreted. The protein resides in the extracellular space. The protein localises to the extracellular matrix. The catalysed reaction is Cleavage of interstitial collagens in the triple helical domain. Unlike EC 3.4.24.7, this enzyme cleaves type III collagen more slowly than type I.. Its activity is regulated as follows. Cannot be activated without removal of the activation peptide. Activated by matrilysin. Can degrade fibrillar type I, II, and III collagens. May play a role in the degradation of collagen fibers during uterine involution. In Mus musculus (Mouse), this protein is Neutrophil collagenase (Mmp8).